A 506-amino-acid chain; its full sequence is Maturase K (506 aa).

Belongs to the intron maturase 2 family. MatK subfamily.

It is found in the plastid. Its subcellular location is the chloroplast. Its function is as follows. Usually encoded in the trnK tRNA gene intron. Probably assists in splicing its own and other chloroplast group II introns. In Phyllodoce empetriformis (Pink mountainheath), this protein is Maturase K.